A 185-amino-acid chain; its full sequence is MLTLASKLKRDDGVKGSRTSSTTSDSTRRVSVRDRLLVKEVAELEANLPCTCKVNFPDPNKLHYFHLTVSPDESYYQGGRFQFEIEVPDAYNMVPPKVKCLTRIWHPNITETGEICLSLLREHSIDGTGWAPTRTLKDVVWGLNSLFTDLLNFDDPLNIEAAEHHLRDKDEYRNKVEDYIKRYAR.

The disordered stretch occupies residues 1-29 (MLTLASKLKRDDGVKGSRTSSTTSDSTRR). The tract at residues 1-29 (MLTLASKLKRDDGVKGSRTSSTTSDSTRR) is interaction with uba3. Residues 32–185 (VRDRLLVKEV…VEDYIKRYAR (154 aa)) enclose the UBC core domain. C116 serves as the catalytic Glycyl thioester intermediate.

This sequence belongs to the ubiquitin-conjugating enzyme family. UBE2F subfamily.

It catalyses the reaction [E1 NEDD8-activating enzyme]-S-[NEDD8 protein]-yl-L-cysteine + [E2 NEDD8-conjugating enzyme]-L-cysteine = [E1 NEDD8-activating enzyme]-L-cysteine + [E2 NEDD8-conjugating enzyme]-S-[NEDD8-protein]-yl-L-cysteine.. The protein operates within protein modification; protein neddylation. Its function is as follows. Accepts the ubiquitin-like protein NEDD8 from the UBA3-NAE1 E1 complex and catalyzes its covalent attachment to other proteins. Together with the E3 ubiquitin ligase rnf7/rbx2, specifically neddylates cullin-5 (cul5). Does not neddylate cul1, cul2, cul3, cul4a or cul4b. The sequence is that of NEDD8-conjugating enzyme UBE2F (ube2f) from Xenopus tropicalis (Western clawed frog).